The primary structure comprises 328 residues: Tryptophan--tRNA ligase (328 aa).

ATP-binding positions include 8 to 10 and 16 to 17; these read RPT and GH. The short motif at 9–17 is the 'HIGH' region element; it reads PTGKLHIGH. Residue aspartate 136 coordinates L-tryptophan. Residues 148 to 150, leucine 186, and 193 to 197 contribute to the ATP site; these read GED and KMSKS. Residues 193–197 carry the 'KMSKS' region motif; that stretch reads KMSKS.

This sequence belongs to the class-I aminoacyl-tRNA synthetase family. As to quaternary structure, homodimer.

Its subcellular location is the cytoplasm. The enzyme catalyses tRNA(Trp) + L-tryptophan + ATP = L-tryptophyl-tRNA(Trp) + AMP + diphosphate + H(+). Functionally, catalyzes the attachment of tryptophan to tRNA(Trp). This is Tryptophan--tRNA ligase from Thermotoga maritima (strain ATCC 43589 / DSM 3109 / JCM 10099 / NBRC 100826 / MSB8).